We begin with the raw amino-acid sequence, 345 residues long: Probable dual-specificity RNA methyltransferase RlmN (345 aa).

The active-site Proton acceptor is E98. The Radical SAM core domain maps to 104–332 (TYKRLTVCVS…VSIRYSRGLE (229 aa)). A disulfide bond links C111 and C337. [4Fe-4S] cluster is bound by residues C118, C122, and C125. S-adenosyl-L-methionine contacts are provided by residues 165–166 (GE), S195, 218–220 (SLH), and N294. C337 serves as the catalytic S-methylcysteine intermediate.

The protein belongs to the radical SAM superfamily. RlmN family. Requires [4Fe-4S] cluster as cofactor.

The protein resides in the cytoplasm. The catalysed reaction is adenosine(2503) in 23S rRNA + 2 reduced [2Fe-2S]-[ferredoxin] + 2 S-adenosyl-L-methionine = 2-methyladenosine(2503) in 23S rRNA + 5'-deoxyadenosine + L-methionine + 2 oxidized [2Fe-2S]-[ferredoxin] + S-adenosyl-L-homocysteine. The enzyme catalyses adenosine(37) in tRNA + 2 reduced [2Fe-2S]-[ferredoxin] + 2 S-adenosyl-L-methionine = 2-methyladenosine(37) in tRNA + 5'-deoxyadenosine + L-methionine + 2 oxidized [2Fe-2S]-[ferredoxin] + S-adenosyl-L-homocysteine. Specifically methylates position 2 of adenine 2503 in 23S rRNA and position 2 of adenine 37 in tRNAs. In Trichodesmium erythraeum (strain IMS101), this protein is Probable dual-specificity RNA methyltransferase RlmN.